Consider the following 417-residue polypeptide: 3-oxo-isoapionate-4-phosphate decarboxylase (417 aa).

K177, D179, and E180 together coordinate Mg(2+). K177 bears the N6-carboxylysine mark.

This sequence belongs to the RuBisCO large chain family. The cofactor is Mg(2+).

It catalyses the reaction 3-oxoisoapionate 4-phosphate + H(+) = L-erythrulose 1-phosphate + CO2. It participates in carbohydrate metabolism. Its function is as follows. Involved in catabolism of D-apiose. Catalyzes the decarboxylation of 3-oxo-isoapionate 4-phosphate to L-erythrulose 1-phosphate. This chain is 3-oxo-isoapionate-4-phosphate decarboxylase, found in Rhizobium etli (strain ATCC 51251 / DSM 11541 / JCM 21823 / NBRC 15573 / CFN 42).